Here is a 421-residue protein sequence, read N- to C-terminus: Immunoglobulin heavy constant epsilon (421 aa).

Ig-like domains are found at residues 5–97 (PQLY…VNIT), 99–184 (PTLE…KVTS), 201–301 (PRGV…RSIT), and 310–410 (PEVY…KTIS). Cysteine 23 and cysteine 75 are oxidised to a cystine. 9 N-linked (GlcNAc...) asparagine glycosylation sites follow: asparagine 43, asparagine 72, asparagine 84, asparagine 95, asparagine 166, asparagine 238, asparagine 261, asparagine 365, and asparagine 415. Cystine bridges form between cysteine 121/cysteine 180, cysteine 226/cysteine 285, and cysteine 330/cysteine 392.

The basic structural unit consists of two identical heavy chains and two identical light chains; disulfide-linked. N-terminal variable regions of the heavy and light chains form the antigen binding sites, whereas the C-terminal constant regions of the heavy chains interact with immune receptors to mediate effector functions.

Its subcellular location is the secreted. It is found in the cell membrane. In terms of biological role, constant region of immunoglobulin heavy chains. Immunoglobulins, also known as antibodies, are membrane-bound or secreted glycoproteins produced by B lymphocytes. In the recognition phase of humoral immunity, the membrane-bound immunoglobulins serve as receptors which, upon binding of a specific antigen, trigger the clonal expansion and differentiation of B lymphocytes into immunoglobulins-secreting plasma cells. Secreted immunoglobulins mediate the effector phase of humoral immunity, which results in the elimination of bound antigens. The antigen binding site is formed by the variable domain of one heavy chain, together with that of its associated light chain. Thus, each immunoglobulin has two antigen binding sites with remarkable affinity for a particular antigen. The variable domains are assembled by a process called V-(D)-J rearrangement and can then be subjected to somatic hypermutations which, after exposure to antigen and selection, allow affinity maturation for a particular antigen. This Mus musculus (Mouse) protein is Immunoglobulin heavy constant epsilon.